The primary structure comprises 338 residues: Anthranilate phosphoribosyltransferase (338 aa).

Residues glycine 81, 84–85 (GD), threonine 89, 91–94 (NIST), 109–117 (KHGNRSMVS), and serine 121 each bind 5-phospho-alpha-D-ribose 1-diphosphate. Glycine 81 contributes to the anthranilate binding site. Serine 93 provides a ligand contact to Mg(2+). Asparagine 112 serves as a coordination point for anthranilate. Arginine 167 contacts anthranilate. 2 residues coordinate Mg(2+): aspartate 226 and glutamate 227.

This sequence belongs to the anthranilate phosphoribosyltransferase family. In terms of assembly, homodimer. Mg(2+) is required as a cofactor.

It catalyses the reaction N-(5-phospho-beta-D-ribosyl)anthranilate + diphosphate = 5-phospho-alpha-D-ribose 1-diphosphate + anthranilate. The protein operates within amino-acid biosynthesis; L-tryptophan biosynthesis; L-tryptophan from chorismate: step 2/5. Its function is as follows. Catalyzes the transfer of the phosphoribosyl group of 5-phosphorylribose-1-pyrophosphate (PRPP) to anthranilate to yield N-(5'-phosphoribosyl)-anthranilate (PRA). The sequence is that of Anthranilate phosphoribosyltransferase from Acidithiobacillus ferrooxidans (strain ATCC 23270 / DSM 14882 / CIP 104768 / NCIMB 8455) (Ferrobacillus ferrooxidans (strain ATCC 23270)).